The sequence spans 626 residues: Chaperone protein HtpG (626 aa).

The a; substrate-binding stretch occupies residues 1–341 (METKQFKAES…SEDLSLNISR (341 aa)). A b region spans residues 342-552 (EILQHDRQLK…EGELSIEMEK (211 aa)). Positions 490 to 509 (DLGIEGEEKENTSSSDDKEN) are disordered. Residues 498 to 509 (KENTSSSDDKEN) show a composition bias toward basic and acidic residues. Residues 553-626 (VLNAMPNNQN…FTNNICKIMK (74 aa)) are c.

This sequence belongs to the heat shock protein 90 family. As to quaternary structure, homodimer.

It localises to the cytoplasm. Molecular chaperone. Has ATPase activity. The sequence is that of Chaperone protein HtpG from Clostridium botulinum (strain Okra / Type B1).